Consider the following 889-residue polypeptide: Chromatin structure-remodeling complex subunit RSC2 (889 aa).

Residues 12-120 form the Bromo 1 domain; sequence QNSSALYKDL…KYLKDTIYPN (109 aa). The interval 151 to 268 is disordered; the sequence is EKAEEVARAN…QVSRTQVKRG (118 aa). Positions 158–174 are enriched in low complexity; it reads RANAARAESSSSMNSTE. A compositionally biased stretch (acidic residues) spans 197 to 209; the sequence is NNDEDYEATDMDI. The span at 210–222 shows a compositional bias: basic and acidic residues; that stretch reads DNPKDADFPDLIR. Residues 241–250 are compositionally biased toward polar residues; it reads STTPSHSGTP. A compositionally biased stretch (basic residues) spans 255 to 268; sequence PRHRQVSRTQVKRG. In terms of domain architecture, Bromo 2 spans 280 to 382; sequence RMKNVMKVLK…KTFTSLARFE (103 aa). The BAH domain occupies 408-526; that stretch reads ISYHVGDWAL…ESDKIFNKIR (119 aa). The disordered stretch occupies residues 601 to 624; sequence GEYATSDDCPRYIIRPNDSPEEGQ. Y612 carries the phosphotyrosine modification. S682 bears the Phosphoserine mark. Positions 831 to 865 are disordered; sequence EVEETMEDVTGKDKDDDGLEPDVENEKESLPGPFV.

The protein belongs to the RSC1 family. In terms of assembly, component of the two forms of the RSC complex composed of at least either RSC1 or RSC2, and ARP7, ARP9, LDB7, NPL6, RSC3, RSC30, RSC4, RSC58, RSC6, RSC8, RSC9, SFH1, STH1, HTL1 and probably RTT102. The complexes interact with histone and histone variant components of centromeric chromatin.

Its subcellular location is the nucleus. Its function is as follows. Component of the chromatin structure remodeling complex (RSC), which is involved in transcription regulation and nucleosome positioning. RSC is responsible for the transfer of a histone octamer from a nucleosome core particle to naked DNA. The reaction requires ATP and involves an activated RSC-nucleosome intermediate. Remodeling reaction also involves DNA translocation, DNA twist and conformational change. As a reconfigurer of centromeric and flanking nucleosomes, RSC complex is required both for proper kinetochore function in chromosome segregation and, via a PKC1-dependent signaling pathway, for organization of the cellular cytoskeleton. This subunit is involved in meiotic sporulation through regulating IME2 expression, and is also essential for 2-micron plasmid maintenance and for normal REP1 protein localization. The polypeptide is Chromatin structure-remodeling complex subunit RSC2 (RSC2) (Saccharomyces cerevisiae (strain ATCC 204508 / S288c) (Baker's yeast)).